Here is a 438-residue protein sequence, read N- to C-terminus: Aspartate--tRNA(Asp) ligase (438 aa).

E170 provides a ligand contact to L-aspartate. Positions 192–195 (QLYK) are aspartate. Position 214 (R214) interacts with L-aspartate. ATP-binding positions include 214–216 (RAE), 222–224 (RHL), and E361. The Mg(2+) site is built by E361 and S364. Residues S364 and R368 each coordinate L-aspartate. 409–412 (GAER) contributes to the ATP binding site.

This sequence belongs to the class-II aminoacyl-tRNA synthetase family. Type 2 subfamily. In terms of assembly, homodimer. The cofactor is Mg(2+).

The protein resides in the cytoplasm. The enzyme catalyses tRNA(Asp) + L-aspartate + ATP = L-aspartyl-tRNA(Asp) + AMP + diphosphate. Its function is as follows. Catalyzes the attachment of L-aspartate to tRNA(Asp) in a two-step reaction: L-aspartate is first activated by ATP to form Asp-AMP and then transferred to the acceptor end of tRNA(Asp). This chain is Aspartate--tRNA(Asp) ligase, found in Pyrococcus furiosus (strain ATCC 43587 / DSM 3638 / JCM 8422 / Vc1).